We begin with the raw amino-acid sequence, 159 residues long: Protein E6 (159 aa).

2 zinc fingers span residues Cys-35–Cys-71 and Cys-108–Cys-144.

Belongs to the papillomaviridae E6 protein family. Forms homodimers. Interacts with ubiquitin-protein ligase UBE3A/E6-AP; this interaction stimulates UBE3A ubiquitin activity. Interacts with host TP53 and EP300; this interaction inhibits TP53 activity.

It localises to the host cytoplasm. It is found in the host nucleus. Plays a major role in the induction and maintenance of cellular transformation. E6 associates with host UBE3A/E6-AP ubiquitin-protein ligase and modulates its activity. Sequesters tumor suppressor TP53 in the host cytoplasm and modulates its activity by interacting with host EP300 that results in the reduction of TP53 acetylation and activation. In turn, apoptosis induced by DNA damage is inhibited. E6 also protects host keratinocytes from apoptosis by mediating the degradation of host BAK1. May also inhibit host immune response. The sequence is that of Protein E6 from Homo sapiens (Human).